The primary structure comprises 407 residues: Indoleamine 2,3-dioxygenase 1 (407 aa).

His-350 provides a ligand contact to heme b. The tract at residues 362–388 (SKQKPMGGHKSEEPSNTENRGTGGTDV) is disordered.

It belongs to the indoleamine 2,3-dioxygenase family. Monomer. Heme b is required as a cofactor.

It is found in the cytoplasm. The protein localises to the cytosol. The catalysed reaction is D-tryptophan + O2 = N-formyl-D-kynurenine. The enzyme catalyses L-tryptophan + O2 = N-formyl-L-kynurenine. Activity is inhibited by and MTH-trp (methylthiohydantoin-DL-tryptophan), modestly inhibited by L-1MT (1-methyl-L-tryptophan) but not D-1MT (1-methyl-D-tryptophan). Functionally, catalyzes the first and rate limiting step of the catabolism of the essential amino acid tryptophan along the kynurenine pathway. Involved in the peripheral immune tolerance, contributing to maintain homeostasis by preventing autoimmunity or immunopathology that would result from uncontrolled and overreacting immune responses. Tryptophan shortage inhibits T lymphocytes division and accumulation of tryptophan catabolites induces T-cell apoptosis and differentiation of regulatory T-cells. Acts as a suppressor of anti-tumor immunity. Limits the growth of intracellular pathogens by depriving tryptophan. Protects the fetus from maternal immune rejection. This Rattus norvegicus (Rat) protein is Indoleamine 2,3-dioxygenase 1.